A 77-amino-acid polypeptide reads, in one-letter code: UPF0291 protein Bsph_1689 (77 aa).

This sequence belongs to the UPF0291 family.

It localises to the cytoplasm. The sequence is that of UPF0291 protein Bsph_1689 from Lysinibacillus sphaericus (strain C3-41).